The following is a 466-amino-acid chain: 3-isopropylmalate dehydratase large subunit (466 aa).

The [4Fe-4S] cluster site is built by C347, C407, and C410.

The protein belongs to the aconitase/IPM isomerase family. LeuC type 1 subfamily. Heterodimer of LeuC and LeuD. Requires [4Fe-4S] cluster as cofactor.

It carries out the reaction (2R,3S)-3-isopropylmalate = (2S)-2-isopropylmalate. The protein operates within amino-acid biosynthesis; L-leucine biosynthesis; L-leucine from 3-methyl-2-oxobutanoate: step 2/4. Catalyzes the isomerization between 2-isopropylmalate and 3-isopropylmalate, via the formation of 2-isopropylmaleate. The sequence is that of 3-isopropylmalate dehydratase large subunit from Pectobacterium atrosepticum (strain SCRI 1043 / ATCC BAA-672) (Erwinia carotovora subsp. atroseptica).